We begin with the raw amino-acid sequence, 175 residues long: MVNAEDLFINLAKSLLGDDVIDVLRVLLEKGTEMTDEEIANQLNIKVNDVRKKLNLLEEQGFVSYRKTRDKDSGWFIYYWKPNIDQINEILLNRKRLILDKLKSRLEYEKNNTFFICPQDNSRYSFEEAFENEFKCLKCGSQLTYYDTEKIKSFLEQKIRQIEEEIDKETKLWGK.

In terms of domain architecture, HTH TFE/IIEalpha-type spans 4–88 (AEDLFINLAK…YWKPNIDQIN (85 aa)).

This sequence belongs to the TFE family. Monomer. Interaction with RNA polymerase subunits RpoF and RpoE is necessary for Tfe stimulatory transcription activity. Able to interact with Tbp and RNA polymerase in the absence of DNA promoter. Interacts both with the preinitiation and elongation complexes.

Transcription factor that plays a role in the activation of archaeal genes transcribed by RNA polymerase. Facilitates transcription initiation by enhancing TATA-box recognition by TATA-box-binding protein (Tbp), and transcription factor B (Tfb) and RNA polymerase recruitment. Not absolutely required for transcription in vitro, but particularly important in cases where Tbp or Tfb function is not optimal. It dynamically alters the nucleic acid-binding properties of RNA polymerases by stabilizing the initiation complex and destabilizing elongation complexes. Seems to translocate with the RNA polymerase following initiation and acts by binding to the non template strand of the transcription bubble in elongation complexes. The chain is Transcription factor E from Saccharolobus islandicus (strain Y.N.15.51 / Yellowstone #2) (Sulfolobus islandicus).